Here is a 409-residue protein sequence, read N- to C-terminus: uncharacterized protein (409 aa).

Histidine 46 provides a ligand contact to Zn(2+). Glutamate 49 serves as the catalytic Proton acceptor. Residues histidine 50 and glutamate 126 each coordinate Zn(2+).

It belongs to the peptidase M16 family. Zn(2+) is required as a cofactor.

This is an uncharacterized protein from Bacillus subtilis (strain 168).